Here is a 412-residue protein sequence, read N- to C-terminus: MNAEIIAVGTELLLGQIANTNAQFLSEKLASIGINVYYHTVVGDNNKRLQQAIEVAEERADMLIFTGGLGPTKDDLTKETIASSLAEELVYDEKALASISDYFKRTGREFTENNKKQALVLDGATVFANDHGMAPGMGLNKNGKVYILLPGPPKEMKPMYVSYVEPFLRNFTTGENIYSRVLRFFGIGESQLEVKVQDLIDGQTNPTIAPLANDGEVTLRLTAKHQNVHEAEKLIQHVEDLILERVGEFFYGYDQEFLHYKAIELLKKKGLTLACAESLTGGLFGNQVTENAGVSSVFKGGVICYHNDVKQHVLHVPEEVLSTDGAVSKECARYLAENVRELLKADIGISFTGVAGPDASEHKEPGTVFVGLAIKDEPTVVFPLNLSGSRQQIRERSAKYGFYHLYKKLEEI.

It belongs to the CinA family.

The sequence is that of Putative competence-damage inducible protein from Bacillus cereus (strain AH187).